The sequence spans 276 residues: Cerberus (276 aa).

The N-terminal stretch at 1 to 20 (MLLCVLKIYIIFCLVNDGAG) is a signal peptide. N-linked (GlcNAc...) asparagine glycans are attached at residues N103, N118, and N160. 4 disulfides stabilise this stretch: C175–C221, C189–C235, C199–C251, and C203–C253. The CTCK domain occupies 175–259 (CKTLPFTQNI…ECACEAHKNN (85 aa)). N234 carries an N-linked (GlcNAc...) asparagine glycan.

It belongs to the DAN family. The long chain interacts with nodal/nr-1, bmp4 and wnt8, thereby inhibiting their function. The short chain interacts with nodal/nr-1 but not bmp4 or wnt8. As to expression, expressed in the anterior endomesoderm of the early gastrula with expression expanded laterally around the margin at the endoderm/mesoderm boundary.

The protein resides in the secreted. Functionally, inhibits wnt, nodal/nr-1 and bmp signaling in the embryo to promote head formation and anterior neural induction. Within the endoderm, acts as an essential mediator of nodal/nr-1-induced cardiogenesis in the overlying mesoderm. In Xenopus tropicalis (Western clawed frog), this protein is Cerberus.